Consider the following 602-residue polypeptide: MDFTTLQNDFTNDYQKALIANNEFLEAKKYYNGNQLPQDVLNIILERGQTPIIENMFKVIVNKILGYKIESISEIRLSPKQEEDRALSDLLNSLLQVFIQQENYDKSMIERDKNLLIGGLGVIQLWVSQDKDKNVEIEIKAIKPESFVIDYFSTDKNALDARRFHKMLEVSEQEALLLFGDSVIVNYSNVNHERIASVIESWYKEYNEETQSYEWNRYLWNRNTGIYKSEKKPFKNGACPFIVSKLYTDELNNYYGLFRDIKPMQDFINYAENRMGNMMGSFKAMFEEDAVVDVAEFVETMSLDNAIAKVRPNALKDHKIQFMNNQADLSALSQKAEQKRQLLRLLAGLNDESLGMAVNRQSGVAIAQRKESGLMGLQTFLKATDDMDRLIFRLAVSFICEYFTKEQVFKIVDKKLGDRYFKINSNDDNKIRPLKFDLILKSQLKTESRDEKWYNWNELLKILAPIRPDLVPSLVPLMLNDMDSPITNDVLEAIQNANALQQQNAEANAPYNQQIQALQIQKLQAEIMELQAKAHKYAEQGALSQTTNESEKINQAVAITEMQQQNANNANNEESNNKPKKKLKTSDKTTWRKYPSAQNLDY.

Coiled coils occupy residues 324–352 (NNQA…LNDE) and 486–542 (ITND…EQGA). The interval 567 to 602 (ANNANNEESNNKPKKKLKTSDKTTWRKYPSAQNLDY) is disordered.

In terms of assembly, homododecamer.

The protein resides in the virion. Forms the portal vertex of the capsid. This portal plays critical roles in head assembly, genome packaging, neck/tail attachment, and genome ejection. The portal protein multimerizes as a single ring-shaped homododecamer arranged around a central channel. This chain is Portal protein, found in Helicobacter pylori bacteriophage KHP30.